A 299-amino-acid chain; its full sequence is Taste receptor type 2 member 5 (299 aa).

Residue methionine 1 is a topological domain, extracellular. A helical membrane pass occupies residues 2 to 22 (LSAGLGLLMLVAVVEFLIGLI). Residues 23–45 (GNGVLVVWSFREWMRKFNWSSYN) are Cytoplasmic-facing. Residues 46–66 (LIILGLAGCRFLLQWLIILDL) traverse the membrane as a helical segment. Residues 67–82 (SLFPLFQSSRWLRYLS) are Extracellular-facing. Residues 83–103 (IFWVLVSQASLWFATFLSVFY) form a helical membrane-spanning segment. The Cytoplasmic segment spans residues 104 to 127 (CKKITTFDRPAYLWLKQRAYNLSL). A helical membrane pass occupies residues 128–148 (WCLLGYFIINLLLTVQIGLMF). Topologically, residues 149-175 (YHPPQGNSSIRYPFESWQYLYAFRLNS) are extracellular. Asparagine 155 carries N-linked (GlcNAc...) asparagine glycosylation. The helical transmembrane segment at 176–196 (GSYLPLMVFLVSSGMLIVSLY) threads the bilayer. The Cytoplasmic portion of the chain corresponds to 197–223 (THHKKMKVHSAGRRDVRAKAHITALKS). A helical transmembrane segment spans residues 224–244 (LGCFLFLHLVYIMASPFSITS). Residues 245–253 (KTYPPDLTS) are Extracellular-facing. The chain crosses the membrane as a helical span at residues 254-274 (VFIWETLMAAYPSLHSLILIM). At 275–299 (GIPRVKQTCQKILWKTVCARRCWGP) the chain is on the cytoplasmic side.

Belongs to the G-protein coupled receptor T2R family.

It is found in the membrane. Functionally, receptor that may play a role in the perception of bitterness and is gustducin-linked. May play a role in sensing the chemical composition of the gastrointestinal content. The activity of this receptor may stimulate alpha gustducin, mediate PLC-beta-2 activation and lead to the gating of TRPM5. The protein is Taste receptor type 2 member 5 (TAS2R5) of Gorilla gorilla gorilla (Western lowland gorilla).